The following is a 347-amino-acid chain: Phosphoribosylformylglycinamidine cyclo-ligase (347 aa).

The protein belongs to the AIR synthase family.

The protein resides in the cytoplasm. It carries out the reaction 2-formamido-N(1)-(5-O-phospho-beta-D-ribosyl)acetamidine + ATP = 5-amino-1-(5-phospho-beta-D-ribosyl)imidazole + ADP + phosphate + H(+). The protein operates within purine metabolism; IMP biosynthesis via de novo pathway; 5-amino-1-(5-phospho-D-ribosyl)imidazole from N(2)-formyl-N(1)-(5-phospho-D-ribosyl)glycinamide: step 2/2. The sequence is that of Phosphoribosylformylglycinamidine cyclo-ligase from Hydrogenovibrio crunogenus (strain DSM 25203 / XCL-2) (Thiomicrospira crunogena).